The primary structure comprises 129 residues: Histone H3 (129 aa).

Residues 1 to 36 are disordered; the sequence is MSRTKETARAKRTITSKKSKKAPSGASGVKRSHRRW. The segment covering 10–21 has biased composition (basic residues); it reads AKRTITSKKSKK.

The protein belongs to the histone H3 family. As to quaternary structure, the nucleosome is a histone octamer containing two molecules each of H2A, H2B, H3 and H4 assembled in one H3-H4 heterotetramer and two H2A-H2B heterodimers. The octamer wraps approximately 147 bp of DNA.

The protein resides in the nucleus. The protein localises to the chromosome. Core component of nucleosome. Nucleosomes wrap and compact DNA into chromatin, limiting DNA accessibility to the cellular machineries which require DNA as a template. Histones thereby play a central role in transcription regulation, DNA repair, DNA replication and chromosomal stability. DNA accessibility is regulated via a complex set of post-translational modifications of histones, also called histone code, and nucleosome remodeling. In Leishmania infantum, this protein is Histone H3.